The sequence spans 241 residues: Large ribosomal subunit protein bL25 (241 aa).

Residues 214–241 (LDAVKAGEEGSRAQQETEEASERADQGQ) form a disordered region.

This sequence belongs to the bacterial ribosomal protein bL25 family. CTC subfamily. Part of the 50S ribosomal subunit; part of the 5S rRNA/L5/L18/L25 subcomplex. Contacts the 5S rRNA. Binds to the 5S rRNA independently of L5 and L18.

In terms of biological role, this is one of the proteins that binds to the 5S RNA in the ribosome where it forms part of the central protuberance. The sequence is that of Large ribosomal subunit protein bL25 from Deinococcus geothermalis (strain DSM 11300 / CIP 105573 / AG-3a).